Reading from the N-terminus, the 359-residue chain is Spermine synthase (359 aa).

Residues 53-304 (SGWFSEPHPR…GVIGFVLCST (252 aa)) enclose the PABS domain. Residue Gln-99 participates in S-adenosyl 3-(methylsulfanyl)propylamine binding. Tyr-129 provides a ligand contact to spermidine. Residue Gln-130 participates in S-adenosyl 3-(methylsulfanyl)propylamine binding. Asp-154 is a binding site for spermidine. Residues Glu-174 and 205–206 (DA) contribute to the S-adenosyl 3-(methylsulfanyl)propylamine site. Asp-224 serves as the catalytic Proton acceptor. Position 292 (Tyr-292) interacts with putrescine.

This sequence belongs to the spermidine/spermine synthase family. Heterodimer. Component of a multiprotein complex. Interacts with SPDSYN1 and SPDSYN2. Expressed predominantly in stem internodes, flower buds and roots.

The catalysed reaction is S-adenosyl 3-(methylsulfanyl)propylamine + spermidine = spermine + S-methyl-5'-thioadenosine + H(+). It participates in amine and polyamine biosynthesis; spermine biosynthesis; spermine from spermidine: step 1/1. This chain is Spermine synthase (SPMS), found in Arabidopsis thaliana (Mouse-ear cress).